Consider the following 493-residue polypeptide: Cysteine--tRNA ligase (493 aa).

Cysteine 29 is a Zn(2+) binding site. The 'HIGH' region motif lies at 31-41 (VTVYDLCHLGH). Residues 154–179 (KLSGRDPDDQQQGASGRTADGEESRK) are disordered. Zn(2+) contacts are provided by cysteine 213, histidine 238, and glutamate 242. The 'KMSKS' region motif lies at 270-274 (KMSKS). Lysine 273 is a binding site for ATP.

This sequence belongs to the class-I aminoacyl-tRNA synthetase family. Monomer. The cofactor is Zn(2+).

It localises to the cytoplasm. The enzyme catalyses tRNA(Cys) + L-cysteine + ATP = L-cysteinyl-tRNA(Cys) + AMP + diphosphate. The polypeptide is Cysteine--tRNA ligase (Synechococcus sp. (strain CC9605)).